We begin with the raw amino-acid sequence, 521 residues long: DNA damage-binding protein cmr1 (521 aa).

Residues 36-75 (DKIIPKPAPPKPKRASTPRVKREPVKKEAARPTRQSSRLA) are disordered. Residues 55–66 (VKREPVKKEAAR) are compositionally biased toward basic and acidic residues. WD repeat units follow at residues 183-224 (IVPQ…PKIE), 242-282 (THSR…STEI), 333-373 (LTDH…GKGD), 382-422 (EHES…EWKA), and 490-521 (DGIT…CLWM).

This sequence belongs to the WD repeat DDB2/WDR76 family.

Functionally, DNA-binding protein that binds to both single- and double-stranded DNA. Binds preferentially to UV-damaged DNA. May be involved in DNA-metabolic processes. The sequence is that of DNA damage-binding protein cmr1 from Neurospora crassa (strain ATCC 24698 / 74-OR23-1A / CBS 708.71 / DSM 1257 / FGSC 987).